The sequence spans 193 residues: MSQVWTAELRTEEGKGASRRLRHAGKVPAIIYGGDVDAKSIALKSNQIERALKLDVDLYNSVLTLEGAGDAENCIIKDLQRHPATGFITHIDFQRASDKAMVTKRVPLKFKGKESSPGVKMGGLMSFMQTTVEVSCLAKDLPTAIDVDVSELEAGTNLRLSQLTLPKGVKLTALTHGNTDYDQAVVGISKVKR.

Belongs to the bacterial ribosomal protein bL25 family. CTC subfamily. As to quaternary structure, part of the 50S ribosomal subunit; part of the 5S rRNA/L5/L18/L25 subcomplex. Contacts the 5S rRNA. Binds to the 5S rRNA independently of L5 and L18.

In terms of biological role, this is one of the proteins that binds to the 5S RNA in the ribosome where it forms part of the central protuberance. The chain is Large ribosomal subunit protein bL25 from Hydrogenovibrio crunogenus (strain DSM 25203 / XCL-2) (Thiomicrospira crunogena).